The following is a 134-amino-acid chain: uncharacterized protein (134 aa).

Belongs to the orthopoxviruses B21 protein family.

This is an uncharacterized protein from Bos taurus (Bovine).